Here is a 336-residue protein sequence, read N- to C-terminus: Hdr-like menaquinol oxidoreductase cytochrome b-like subunit (336 aa).

Transmembrane regions (helical) follow at residues 4-24, 60-80, 102-122, 145-165, 184-204, and 232-252; these read ALYIFYALPYICFAIFVIGTI, IDSPSSKFWAFVRVLFVVFLF, WLWLFAILFHYSLLVIVIRHL, VAIVPPLLMTGVIALVALAFL, HLILFFMAVILVSGLLMRYII, and LHWLFLIHFTFVCITIAYIPF.

It localises to the cell membrane. In terms of biological role, has menaquinol-oxidizing activity. The HmeC and HmeD subunits may together mediate electron transfer from menaquinol to an unidentified electron acceptor on the cytoplasmic side of the membrane. The sequence is that of Hdr-like menaquinol oxidoreductase cytochrome b-like subunit (hmeC) from Archaeoglobus profundus (strain DSM 5631 / JCM 9629 / NBRC 100127 / Av18).